The primary structure comprises 282 residues: Bifunctional protein FolD (282 aa).

Residues 164 to 166 (GRS) and serine 189 each bind NADP(+).

Belongs to the tetrahydrofolate dehydrogenase/cyclohydrolase family. In terms of assembly, homodimer.

It carries out the reaction (6R)-5,10-methylene-5,6,7,8-tetrahydrofolate + NADP(+) = (6R)-5,10-methenyltetrahydrofolate + NADPH. The enzyme catalyses (6R)-5,10-methenyltetrahydrofolate + H2O = (6R)-10-formyltetrahydrofolate + H(+). Its pathway is one-carbon metabolism; tetrahydrofolate interconversion. Catalyzes the oxidation of 5,10-methylenetetrahydrofolate to 5,10-methenyltetrahydrofolate and then the hydrolysis of 5,10-methenyltetrahydrofolate to 10-formyltetrahydrofolate. This chain is Bifunctional protein FolD, found in Lactobacillus helveticus (strain DPC 4571).